Reading from the N-terminus, the 390-residue chain is MTFKRVHLIVMDSVGIGEAPDAEKFGDAGSHTLKHTLEGFEGKLPNLEKLGLGNIAPLPVVNKVDKPEAYYTKLSEASVGKDTMTGHWEIMGLNIDQPFKVYPDGFPEELVTAIEEMTGRKVVANKPASGTAIIDEWGAHQMETGDLIVYTSADPVLQIAAHEEIIPLEELYEICEKVREYTKDPKYLIGRIIARPYVGEPGNFTRTSNRHDYALKPFGRTVMNELQDAGRDVIAIGKINDIYDGEGVTKSIRTKDNMDGMDKLLEVVKSDFDGLSFLNLVDFDALYGHRRDKEGYMNAIKAFDDRLGELLEALREDDLLIITADHGNDPTMPGTDHTREYVPLLMYSKQFDSGRELESHTTFASIGATIADNFGVELPEFGKSYLEELK.

Residues aspartate 12, aspartate 284, histidine 289, aspartate 325, histidine 326, and histidine 337 each contribute to the Mn(2+) site.

The protein belongs to the phosphopentomutase family. Requires Mn(2+) as cofactor.

It is found in the cytoplasm. The enzyme catalyses 2-deoxy-alpha-D-ribose 1-phosphate = 2-deoxy-D-ribose 5-phosphate. It catalyses the reaction alpha-D-ribose 1-phosphate = D-ribose 5-phosphate. It functions in the pathway carbohydrate degradation; 2-deoxy-D-ribose 1-phosphate degradation; D-glyceraldehyde 3-phosphate and acetaldehyde from 2-deoxy-alpha-D-ribose 1-phosphate: step 1/2. Isomerase that catalyzes the conversion of deoxy-ribose 1-phosphate (dRib-1-P) and ribose 1-phosphate (Rib-1-P) to deoxy-ribose 5-phosphate (dRib-5-P) and ribose 5-phosphate (Rib-5-P), respectively. This Macrococcus caseolyticus (strain JCSC5402) (Macrococcoides caseolyticum) protein is Phosphopentomutase.